A 111-amino-acid polypeptide reads, in one-letter code: Large ribosomal subunit protein P2w (111 aa).

Residues 63–111 form a disordered region; it reads ASVPSGGGVAVSAAPSSGGGGAAAPAEKKEAKKEEKEESDDDMGFSLFE. Over residues 88–98 the composition is skewed to basic and acidic residues; the sequence is AEKKEAKKEEK. Ser101 is subject to Phosphoserine.

Belongs to the eukaryotic ribosomal protein P1/P2 family. P1 and P2 exist as dimers at the large ribosomal subunit.

Plays an important role in the elongation step of protein synthesis. In Arabidopsis thaliana (Mouse-ear cress), this protein is Large ribosomal subunit protein P2w (RPP2D).